The chain runs to 242 residues: UPF0309 protein BSUIS_B0903 (242 aa).

The region spanning 30–214 (AADLIAAAAR…ARLVGEGDAP (185 aa)) is the SIS domain.

Belongs to the UPF0309 family.

This Brucella suis (strain ATCC 23445 / NCTC 10510) protein is UPF0309 protein BSUIS_B0903.